Reading from the N-terminus, the 596-residue chain is RNA-binding protein involved in heterochromatin assembly dri1 (596 aa).

The residue at position 176 (serine 176) is a Phosphoserine. In terms of domain architecture, RRM spans 236-314; the sequence is KIVHVAGLTN…RMLEIIPSST (79 aa). The RanBP2-type 1 zinc finger occupies 335–364; sequence RPGDWNCPMCGFSNFQRRTSCFRCSFPGPT. Phosphoserine is present on serine 429. 2 consecutive RanBP2-type zinc fingers follow at residues 437–468 and 552–580; these read RAGD…SRAT and DQGD…PHYS.

In terms of assembly, interacts with dpb4. Interacts with chp1.

The protein localises to the chromosome. Its subcellular location is the nucleus. It is found in the cytoplasm. The protein resides in the cytoplasmic granule. Mediates heterochromatin assembly by promoting RNAi-mediated heterochromatin silencing and histone deacetylation. Binds pericetromeric transcripts and recruits the RNA-induced transcriptional silencing (RITS) complex to heterochromatin. Recruits sir2 to chromatin to promote deacetylation of 'Lys-9' of histone H3. Involved in bipolar spindle assembly during mitosis. Required for proper localization of kinesin-14/Klp2 on the spindle microtubules. The polypeptide is RNA-binding protein involved in heterochromatin assembly dri1 (Schizosaccharomyces pombe (strain 972 / ATCC 24843) (Fission yeast)).